The chain runs to 492 residues: Transmembrane protease serine 2 (492 aa).

At 1–84 (MALNSGSPPA…TVCTSKTKKA (84 aa)) the chain is on the cytoplasmic side. Residues 85-105 (LCITLTLGTFLVGAALAAGLL) form a helical; Signal-anchor for type II membrane protein membrane-spanning segment. Residues 106–492 (WKFMGSKCSN…WIYRQMRADG (387 aa)) lie on the Extracellular side of the membrane. Cystine bridges form between Cys-113/Cys-126, Cys-120/Cys-139, Cys-133/Cys-148, Cys-172/Cys-231, Cys-185/Cys-241, Cys-244/Cys-365, Cys-281/Cys-297, Cys-410/Cys-426, and Cys-437/Cys-465. In terms of domain architecture, LDL-receptor class A spans 118-148 (IECDSSGTCINPSNWCDGVSHCPGGEDENRC). Asn-131, Asp-134, Val-136, Asp-144, and Glu-145 together coordinate Ca(2+). Positions 149–242 (VRLYGPNFIL…SKAVVSLRCI (94 aa)) constitute an SRCR domain. N-linked (GlcNAc...) asparagine glycosylation is found at Asn-213 and Asn-249. Residues 256 to 492 (IVGGESALPG…WIYRQMRADG (237 aa)) form the Peptidase S1 domain. Residues His-296 and Asp-345 each act as charge relay system in the active site. Residues 340-470 (KTKNNDIALM…WGSGCAKAYR (131 aa)) are HKU1-CoV S protein-binding. Ser-441 acts as the Charge relay system in catalysis.

Belongs to the peptidase S1 family. The catalytically active form interacts with ACE2. Post-translationally, proteolytically processed; by an autocatalytic mechanism. Autocleavage induces active conformation. Expressed in several tissues that comprise large populations of epithelial cells with the highest level of transcripts measured in the prostate gland. Expressed in type II pneumocytes in the lung (at protein level). Expressed strongly in small intestine. Also expressed in colon, stomach and salivary gland. Coexpressed with ACE2 within lung type II pneumocytes, ileal absorptive enterocytes, intestinal epithelial cells, cornea, gallbladder and nasal goblet secretory cells.

The protein resides in the cell membrane. The protein localises to the secreted. The enzyme catalyses The enzyme cleaves angiotensin-converting enzyme 2 (EC 3.4.17.23) and cleaves influenzea A and B virus and coronavirus spike glycoproteins at arginine residues.. Functionally, plasma membrane-anchored serine protease that cleaves at arginine residues. Participates in proteolytic cascades of relevance for the normal physiologic function of the prostate. Androgen-induced TMPRSS2 activates several substrates that include pro-hepatocyte growth factor/HGF, the protease activated receptor-2/F2RL1 or matriptase/ST14 leading to extracellular matrix disruption and metastasis of prostate cancer cells. In addition, activates trigeminal neurons and contribute to both spontaneous pain and mechanical allodynia. In terms of biological role, (Microbial infection) Facilitates human coronaviruses SARS-CoV and SARS-CoV-2 infections via two independent mechanisms, proteolytic cleavage of ACE2 receptor which promotes viral uptake, and cleavage of coronavirus spike glycoproteins which activates the glycoprotein for host cell entry. The cleavage of SARS-COV2 spike glycoprotein occurs between the S2 and S2' site. Upon SARS-CoV-2 infection, increases syncytia formation by accelerating the fusion process. Proteolytically cleaves and activates the spike glycoproteins of human coronavirus 229E (HCoV-229E) and human coronavirus EMC (HCoV-EMC) and the fusion glycoproteins F0 of Sendai virus (SeV), human metapneumovirus (HMPV), human parainfluenza 1, 2, 3, 4a and 4b viruses (HPIV). Essential for spread and pathogenesis of influenza A virus (strains H1N1, H3N2 and H7N9); involved in proteolytic cleavage and activation of hemagglutinin (HA) protein which is essential for viral infectivity. (Microbial infection) Receptor for human coronavirus HKU1-CoV, acts synergistically with disialoside glycans to facilitate the entry of the virus. After binding to cell-surface disialoside glycans, the viral S protein interacts with the inactive form of TMPRSS2 and inhibits its protease activity. This chain is Transmembrane protease serine 2, found in Homo sapiens (Human).